A 436-amino-acid chain; its full sequence is 3-ketoacyl-CoA thiolase (436 aa).

Cys-99 functions as the Acyl-thioester intermediate in the catalytic mechanism. Catalysis depends on proton acceptor residues His-392 and Cys-422.

It belongs to the thiolase-like superfamily. Thiolase family. In terms of assembly, heterotetramer of two alpha chains (FadJ) and two beta chains (FadI).

Its subcellular location is the cytoplasm. It catalyses the reaction an acyl-CoA + acetyl-CoA = a 3-oxoacyl-CoA + CoA. Its pathway is lipid metabolism; fatty acid beta-oxidation. Catalyzes the final step of fatty acid oxidation in which acetyl-CoA is released and the CoA ester of a fatty acid two carbons shorter is formed. This is 3-ketoacyl-CoA thiolase from Serratia proteamaculans (strain 568).